A 71-amino-acid chain; its full sequence is ATP synthase subunit c 1 (71 aa).

2 consecutive transmembrane segments (helical) span residues 4 to 24 (FIGAGLATIGLGGAGIGVGHV) and 46 to 66 (LFVGIAFAEALGIFSFLIALL).

Belongs to the ATPase C chain family. F-type ATPases have 2 components, F(1) - the catalytic core - and F(0) - the membrane proton channel. F(1) has five subunits: alpha(3), beta(3), gamma(1), delta(1), epsilon(1). F(0) has four main subunits: a(1), b(1), b'(1) and c(10-14). The alpha and beta chains form an alternating ring which encloses part of the gamma chain. F(1) is attached to F(0) by a central stalk formed by the gamma and epsilon chains, while a peripheral stalk is formed by the delta, b and b' chains.

The protein localises to the cell inner membrane. F(1)F(0) ATP synthase produces ATP from ADP in the presence of a proton or sodium gradient. F-type ATPases consist of two structural domains, F(1) containing the extramembraneous catalytic core and F(0) containing the membrane proton channel, linked together by a central stalk and a peripheral stalk. During catalysis, ATP synthesis in the catalytic domain of F(1) is coupled via a rotary mechanism of the central stalk subunits to proton translocation. Functionally, key component of the F(0) channel; it plays a direct role in translocation across the membrane. A homomeric c-ring of between 10-14 subunits forms the central stalk rotor element with the F(1) delta and epsilon subunits. This chain is ATP synthase subunit c 1, found in Cereibacter sphaeroides (strain ATCC 17029 / ATH 2.4.9) (Rhodobacter sphaeroides).